A 206-amino-acid chain; its full sequence is Small ribosomal subunit protein uS4 (206 aa).

The 61-residue stretch at 96 to 156 folds into the S4 RNA-binding domain; the sequence is SRLDNVVYRM…EKSKNQLRIQ (61 aa).

It belongs to the universal ribosomal protein uS4 family. Part of the 30S ribosomal subunit. Contacts protein S5. The interaction surface between S4 and S5 is involved in control of translational fidelity.

Functionally, one of the primary rRNA binding proteins, it binds directly to 16S rRNA where it nucleates assembly of the body of the 30S subunit. In terms of biological role, with S5 and S12 plays an important role in translational accuracy. The sequence is that of Small ribosomal subunit protein uS4 from Teredinibacter turnerae (strain ATCC 39867 / T7901).